The primary structure comprises 529 residues: Peptide chain release factor 3 (529 aa).

One can recognise a tr-type G domain in the interval Ala-11–Met-280. Residues Ser-20–Thr-27, Asp-88–His-92, and Asn-142–Asp-145 each bind GTP.

This sequence belongs to the TRAFAC class translation factor GTPase superfamily. Classic translation factor GTPase family. PrfC subfamily.

Its subcellular location is the cytoplasm. Functionally, increases the formation of ribosomal termination complexes and stimulates activities of RF-1 and RF-2. It binds guanine nucleotides and has strong preference for UGA stop codons. It may interact directly with the ribosome. The stimulation of RF-1 and RF-2 is significantly reduced by GTP and GDP, but not by GMP. In Yersinia pseudotuberculosis serotype O:1b (strain IP 31758), this protein is Peptide chain release factor 3.